A 221-amino-acid polypeptide reads, in one-letter code: Ribosomal RNA small subunit methyltransferase G (221 aa).

S-adenosyl-L-methionine contacts are provided by residues Gly-83, Phe-88, 132-133, and Arg-146; that span reads LE.

The protein belongs to the methyltransferase superfamily. RNA methyltransferase RsmG family.

The protein resides in the cytoplasm. The catalysed reaction is guanosine(527) in 16S rRNA + S-adenosyl-L-methionine = N(7)-methylguanosine(527) in 16S rRNA + S-adenosyl-L-homocysteine. Its function is as follows. Specifically methylates the N7 position of guanine in position 527 of 16S rRNA. In Zymomonas mobilis subsp. mobilis (strain ATCC 31821 / ZM4 / CP4), this protein is Ribosomal RNA small subunit methyltransferase G.